The sequence spans 430 residues: C4-dicarboxylate transport protein (430 aa).

Transmembrane regions (helical) follow at residues 8-28 (SLYF…HFYP), 44-64 (LIKM…IAGM), 76-96 (IALL…LVIV), 144-164 (AFAS…GFAL), 184-204 (VIFG…FGAM), 222-242 (LIIC…GSIA), 289-309 (VVGL…SIYL), 326-346 (VIHQ…AAGV), and 352-372 (IVLA…LALI).

Belongs to the dicarboxylate/amino acid:cation symporter (DAACS) (TC 2.A.23) family.

It is found in the cell inner membrane. Functionally, responsible for the transport of dicarboxylates such as succinate, fumarate, and malate from the periplasm across the membrane. The polypeptide is C4-dicarboxylate transport protein (Yersinia enterocolitica serotype O:8 / biotype 1B (strain NCTC 13174 / 8081)).